Here is a 423-residue protein sequence, read N- to C-terminus: Zinc transporter ZIP13 (423 aa).

At 1 to 15 (MPGCPCPGIGMAGQR) the chain is on the lumenal side. A helical transmembrane segment spans residues 16-36 (LLFLAALALELLGGAGGSQQA). The Cytoplasmic segment spans residues 37 to 68 (LRSRGVAAACRLDSKESESWGALLSGERLETW). A helical transmembrane segment spans residues 69 to 89 (ICSLLGSLMVGLSGVFPLLVI). The Lumenal segment spans residues 90 to 108 (PLEMGTTLRSEAGARRLKQ). Residues 109-129 (LLSFALGGLLGNVFLHLLPEA) traverse the membrane as a helical segment. Residues 130 to 149 (WAYTNSASSGGERQSLQQQQ) lie on the Cytoplasmic side of the membrane. Residues 150–170 (QLGLWVIAGFLTFLVLEKLFF) traverse the membrane as a helical segment. The Lumenal segment spans residues 171–235 (DSKGKEETSQ…TIDNFTHGLA (65 aa)). The chain crosses the membrane as a helical span at residues 236-256 (VAASFLVSKKIGLLTTMAILL). The XEXPHE-motif signature appears at 257–262 (HEIPHE). Residues 257–278 (HEIPHEVGDFAILLRAGFDRWS) lie on the Cytoplasmic side of the membrane. The chain crosses the membrane as a helical span at residues 279 to 299 (AAKLQLSTALGGLLGACFAIC). Residues 300 to 368 (AQSPKGVGTG…RAPPPATEET (69 aa)) are Lumenal-facing. Residues 369–389 (VAWILPFTSGGFLYIALVNVL) traverse the membrane as a helical segment. Over 390-401 (PDLLEEDDPWRS) the chain is Cytoplasmic. Residues 402 to 422 (LQQVLLLCAGIVVMVLFSVFV) form a helical membrane-spanning segment. Position 423 (glutamate 423) is a topological domain, lumenal.

Belongs to the ZIP transporter (TC 2.A.5) family. In terms of assembly, homodimer.

Its subcellular location is the golgi apparatus membrane. It localises to the cytoplasmic vesicle membrane. The protein resides in the endoplasmic reticulum membrane. It carries out the reaction Zn(2+)(in) = Zn(2+)(out). In terms of biological role, functions as a zinc transporter transporting Zn(2+) from the Golgi apparatus to the cytosol and thus influences the zinc level at least in areas of the cytosol. May regulate beige adipocyte differentiation. In Bos taurus (Bovine), this protein is Zinc transporter ZIP13.